The primary structure comprises 145 residues: Large-conductance mechanosensitive channel (145 aa).

Transmembrane regions (helical) follow at residues V16–F36 and G83–I103.

Belongs to the MscL family. As to quaternary structure, homopentamer.

It localises to the cell inner membrane. In terms of biological role, channel that opens in response to stretch forces in the membrane lipid bilayer. May participate in the regulation of osmotic pressure changes within the cell. The chain is Large-conductance mechanosensitive channel from Geobacter metallireducens (strain ATCC 53774 / DSM 7210 / GS-15).